A 275-amino-acid polypeptide reads, in one-letter code: MTSASIHIGSYTSTTNGNTTVVKAPTKESLSTCLSATATTTSPLDSIDIYINTSDLPTHYDSLALASIVPSLSPGGVLSVHVVSASSSAASNESAAVDVVNWSAITTSFVLAGLKAESEQRDGSGGRVYTARKATASQSASSAAATGRINLGGAKTKVKLSLDDDDDDQLIDEDDLLNGGGGMLAPPPTIDTEARAKSNLDDCGGRKACDNCTCGRAEQEAADAAGGPNEQQSKSSACGNCAKGDAFRCAGCPYLGMPAFKEGEEHLVLKLNDDV.

The interval 1–147 is N-terminal SAM-like domain; sequence MTSASIHIGS…QSASSAAATG (147 aa). The tract at residues 148 to 183 is linker; it reads RINLGGAKTKVKLSLDDDDDDQLIDEDDLLNGGGGM. [2Fe-2S] cluster-binding residues include Cys203, Cys209, Cys212, and Cys214. The fe-S binding site A stretch occupies residues 203–214; the sequence is CGGRKACDNCTC. The [4Fe-4S] cluster site is built by Cys238, Cys241, Cys249, and Cys252. 2 short sequence motifs (cx2C motif) span residues 238-241 and 249-252; these read CGNC and CAGC. Positions 238 to 252 are fe-S binding site B; sequence CGNCAKGDAFRCAGC.

Belongs to the anamorsin family. As to quaternary structure, monomer. The cofactor is [2Fe-2S] cluster. [4Fe-4S] cluster serves as cofactor.

It localises to the cytoplasm. The protein resides in the mitochondrion intermembrane space. Component of the cytosolic iron-sulfur (Fe-S) protein assembly (CIA) machinery. Required for the maturation of extramitochondrial Fe-S proteins. Part of an electron transfer chain functioning in an early step of cytosolic Fe-S biogenesis, facilitating the de novo assembly of a [4Fe-4S] cluster on the cytosolic Fe-S scaffold complex. Electrons are transferred from NADPH via a FAD- and FMN-containing diflavin oxidoreductase. Together with the diflavin oxidoreductase, also required for the assembly of the diferric tyrosyl radical cofactor of ribonucleotide reductase (RNR), probably by providing electrons for reduction during radical cofactor maturation in the catalytic small subunit. The polypeptide is Anamorsin homolog (Thalassiosira pseudonana (Marine diatom)).